Reading from the N-terminus, the 1116-residue chain is Error-prone DNA polymerase 1 (1116 aa).

The protein belongs to the DNA polymerase type-C family. DnaE2 subfamily.

It is found in the cytoplasm. It catalyses the reaction DNA(n) + a 2'-deoxyribonucleoside 5'-triphosphate = DNA(n+1) + diphosphate. Its function is as follows. DNA polymerase involved in damage-induced mutagenesis and translesion synthesis (TLS). It is not the major replicative DNA polymerase. The chain is Error-prone DNA polymerase 1 from Rhizobium meliloti (strain 1021) (Ensifer meliloti).